We begin with the raw amino-acid sequence, 320 residues long: Polyadenylate-binding protein-interacting protein 13 (320 aa).

Residues 1–44 (MAVAENVGVKVDSSNNQNIDNNTTSLVETKPSCSDDQTPKSKSS) form a disordered region. Residues 12–44 (DSSNNQNIDNNTTSLVETKPSCSDDQTPKSKSS) show a composition bias toward polar residues. Residues 65-75 (HLNPMAKEFVP) carry the PAM2-like motif. RRM domains are found at residues 137 to 212 (RTVY…MSKT) and 234 to 310 (KTVY…PSKT).

This is Polyadenylate-binding protein-interacting protein 13 (CID13) from Arabidopsis thaliana (Mouse-ear cress).